The chain runs to 321 residues: tRNA-dihydrouridine synthase B (321 aa).

Residues 16–18 (PMA) and Q70 contribute to the FMN site. C100 (proton donor) is an active-site residue. Residues K139, 200 to 202 (NGD), and 224 to 225 (GR) contribute to the FMN site.

The protein belongs to the Dus family. DusB subfamily. The cofactor is FMN.

The enzyme catalyses a 5,6-dihydrouridine in tRNA + NAD(+) = a uridine in tRNA + NADH + H(+). It catalyses the reaction a 5,6-dihydrouridine in tRNA + NADP(+) = a uridine in tRNA + NADPH + H(+). Catalyzes the synthesis of 5,6-dihydrouridine (D), a modified base found in the D-loop of most tRNAs, via the reduction of the C5-C6 double bond in target uridines. This Escherichia coli O157:H7 protein is tRNA-dihydrouridine synthase B.